The chain runs to 562 residues: Potassium-transporting ATPase potassium-binding subunit (562 aa).

12 consecutive transmembrane segments (helical) span residues 6 to 26 (FLLI…LGGF), 62 to 82 (YALA…VLLM), 132 to 152 (GLTV…FALI), 175 to 195 (LYVL…QGVL), 253 to 273 (FVQM…FGQV), 283 to 303 (LIWA…YAEL), 327 to 347 (FGIL…CGAV), 356 to 376 (ALGG…FGGV), 379 to 399 (GLYG…LMIG), 416 to 436 (MTAL…ALAL), 483 to 503 (LLLA…VLAI), and 526 to 546 (LFIG…FIPA).

This sequence belongs to the KdpA family. In terms of assembly, the system is composed of three essential subunits: KdpA, KdpB and KdpC.

The protein localises to the cell inner membrane. In terms of biological role, part of the high-affinity ATP-driven potassium transport (or Kdp) system, which catalyzes the hydrolysis of ATP coupled with the electrogenic transport of potassium into the cytoplasm. This subunit binds the periplasmic potassium ions and delivers the ions to the membrane domain of KdpB through an intramembrane tunnel. The chain is Potassium-transporting ATPase potassium-binding subunit from Yersinia pseudotuberculosis serotype I (strain IP32953).